A 421-amino-acid chain; its full sequence is 4-hydroxy-3-methylbut-2-en-1-yl diphosphate synthase (flavodoxin) (421 aa).

Cysteine 298, cysteine 301, cysteine 344, and glutamate 351 together coordinate [4Fe-4S] cluster.

The protein belongs to the IspG family. The cofactor is [4Fe-4S] cluster.

The enzyme catalyses (2E)-4-hydroxy-3-methylbut-2-enyl diphosphate + oxidized [flavodoxin] + H2O + 2 H(+) = 2-C-methyl-D-erythritol 2,4-cyclic diphosphate + reduced [flavodoxin]. The protein operates within isoprenoid biosynthesis; isopentenyl diphosphate biosynthesis via DXP pathway; isopentenyl diphosphate from 1-deoxy-D-xylulose 5-phosphate: step 5/6. Functionally, converts 2C-methyl-D-erythritol 2,4-cyclodiphosphate (ME-2,4cPP) into 1-hydroxy-2-methyl-2-(E)-butenyl 4-diphosphate. This chain is 4-hydroxy-3-methylbut-2-en-1-yl diphosphate synthase (flavodoxin), found in Neisseria meningitidis serogroup C (strain 053442).